The primary structure comprises 353 residues: Phosphate acyltransferase (353 aa).

Belongs to the PlsX family. As to quaternary structure, homodimer. Probably interacts with PlsY.

It localises to the cytoplasm. It catalyses the reaction a fatty acyl-[ACP] + phosphate = an acyl phosphate + holo-[ACP]. Its pathway is lipid metabolism; phospholipid metabolism. Its function is as follows. Catalyzes the reversible formation of acyl-phosphate (acyl-PO(4)) from acyl-[acyl-carrier-protein] (acyl-ACP). This enzyme utilizes acyl-ACP as fatty acyl donor, but not acyl-CoA. This chain is Phosphate acyltransferase, found in Rhodopseudomonas palustris (strain BisB18).